We begin with the raw amino-acid sequence, 85 residues long: Probable oxaloacetate decarboxylase gamma chain (85 aa).

Residues 11 to 33 (AATLMVTGMAVVFIFLTILVYLV) form a helical membrane-spanning segment.

It belongs to the OadG family. Heterotrimer of an alpha, a beta and a gamma subunit. Na(+) is required as a cofactor.

The protein resides in the cell membrane. It carries out the reaction oxaloacetate + 2 Na(+)(in) + H(+) = pyruvate + 2 Na(+)(out) + CO2. In terms of biological role, catalyzes the decarboxylation of oxaloacetate coupled to Na(+) translocation. This is Probable oxaloacetate decarboxylase gamma chain from Vibrio parahaemolyticus serotype O3:K6 (strain RIMD 2210633).